The following is a 282-amino-acid chain: Bifunctional protein FolD (282 aa).

NADP(+) is bound by residues 165–167 (GAS) and Ile-231.

This sequence belongs to the tetrahydrofolate dehydrogenase/cyclohydrolase family. As to quaternary structure, homodimer.

It carries out the reaction (6R)-5,10-methylene-5,6,7,8-tetrahydrofolate + NADP(+) = (6R)-5,10-methenyltetrahydrofolate + NADPH. The enzyme catalyses (6R)-5,10-methenyltetrahydrofolate + H2O = (6R)-10-formyltetrahydrofolate + H(+). The protein operates within one-carbon metabolism; tetrahydrofolate interconversion. Catalyzes the oxidation of 5,10-methylenetetrahydrofolate to 5,10-methenyltetrahydrofolate and then the hydrolysis of 5,10-methenyltetrahydrofolate to 10-formyltetrahydrofolate. This is Bifunctional protein FolD from Francisella tularensis subsp. mediasiatica (strain FSC147).